The primary structure comprises 326 residues: MRAVWVLGIDTSCDDTGVGLVRDGKVVVNLVASQVRLHEAFGGVVPELASREHLKALPLLVERALAEAGLRPKDLDLVAATRGPGLIGALLVGYTFAKGMAFALDRPFYAVHHLEGHIAAAWPEGLPPPFLALVASGGHTHLYEVLDLGRYRLLGATRDDAAGEAFDKVARLLGLGFPGGPEVERLAEEAEEAIPFPVPLRGQEGYDFSFSGLKTKALHLVEKGLPKAALAKGFQEAAIAHLAEVVLKAAKDTGHRVLLVAGGVAANRALQERFKEAGLEVHFPPRGLSQDNGAMIALAAWRRHQRGFPPSPLSLGATAYWPLEEA.

The Fe cation site is built by His113 and His117. Substrate is bound by residues 134 to 138 (VASGG), Asp167, Gly180, and Asn267. Residue Asp291 coordinates Fe cation.

Belongs to the KAE1 / TsaD family. Requires Fe(2+) as cofactor.

It is found in the cytoplasm. It carries out the reaction L-threonylcarbamoyladenylate + adenosine(37) in tRNA = N(6)-L-threonylcarbamoyladenosine(37) in tRNA + AMP + H(+). In terms of biological role, required for the formation of a threonylcarbamoyl group on adenosine at position 37 (t(6)A37) in tRNAs that read codons beginning with adenine. Is involved in the transfer of the threonylcarbamoyl moiety of threonylcarbamoyl-AMP (TC-AMP) to the N6 group of A37, together with TsaE and TsaB. TsaD likely plays a direct catalytic role in this reaction. This is tRNA N6-adenosine threonylcarbamoyltransferase from Thermus thermophilus (strain ATCC 27634 / DSM 579 / HB8).